The chain runs to 451 residues: Bacteriochlorophyllide d C-8(2)-methyltransferase (451 aa).

In terms of domain architecture, B12-binding spans 1 to 118; it reads MDDDSNQKPL…DDVANNRLKE (118 aa). Positions 148–377 constitute a Radical SAM core domain; that stretch reads VDGTKSIPIY…ALHLVIKSDR (230 aa). [4Fe-4S] cluster-binding residues include Cys-162, Cys-166, and Cys-169.

It belongs to the radical SAM superfamily. Requires [4Fe-4S] cluster as cofactor.

The protein localises to the cytoplasm. It carries out the reaction 8,12-diethyl-3-vinylbacteriochlorophyllide d + S-adenosyl-L-methionine = 12-ethyl-8-propyl-3-vinylbacteriochlorophyllide d + S-adenosyl-L-homocysteine + H(+). It catalyses the reaction 12-ethyl-8-propyl-3-vinylbacteriochlorophyllide d + S-adenosyl-L-methionine = 12-ethyl-8-isobutyl-3-vinylbacteriochlorophyllide d + S-adenosyl-L-homocysteine + H(+). The protein operates within porphyrin-containing compound metabolism; bacteriochlorophyll biosynthesis (light-independent). Functionally, involved in the biosynthesis of the major light-harvesting pigment bacteriochlorophyll c (BChlc), which confers a significant competitive advantage to green sulfur bacteria living at limiting red and near-infrared light intensities. BchQ is a methyltransferase that adds two consecutive methyl groups to the ethyl carbon at the C-8(2) position of 8,12-diethyl-3-vinylbacteriochlorophyllide d to yield 12-ethyl-8-isobutyl-3-vinylbacteriochlorophyllide d. This is Bacteriochlorophyllide d C-8(2)-methyltransferase from Chlorobaculum tepidum (strain ATCC 49652 / DSM 12025 / NBRC 103806 / TLS) (Chlorobium tepidum).